A 685-amino-acid polypeptide reads, in one-letter code: Translation initiation factor IF-2 (685 aa).

One can recognise a tr-type G domain in the interval 185–354; sequence KRPPVVTVMG…LLTAEMQELK (170 aa). The segment at 194-201 is G1; that stretch reads GHVDHGKT. 194–201 is a binding site for GTP; sequence GHVDHGKT. Residues 219–223 are G2; sequence GITQH. The interval 240–243 is G3; sequence DTPG. GTP is bound by residues 240–244 and 294–297; these read DTPGH and NKMD. The segment at 294 to 297 is G4; that stretch reads NKMD. The segment at 330–332 is G5; it reads SAH.

The protein belongs to the TRAFAC class translation factor GTPase superfamily. Classic translation factor GTPase family. IF-2 subfamily.

It is found in the cytoplasm. Functionally, one of the essential components for the initiation of protein synthesis. Protects formylmethionyl-tRNA from spontaneous hydrolysis and promotes its binding to the 30S ribosomal subunits. Also involved in the hydrolysis of GTP during the formation of the 70S ribosomal complex. In Clostridium tetani (strain Massachusetts / E88), this protein is Translation initiation factor IF-2.